The sequence spans 266 residues: Undecaprenyl-diphosphatase (266 aa).

Helical transmembrane passes span 39–59 (PGSS…VWYF), 86–106 (SIFI…LFVP), 112–132 (VLRS…FMYL), 153–173 (LIGF…GITI), 189–209 (FSFL…FIFS), 216–236 (IGFL…LLAI), and 246–266 (NGLK…LLNL).

The protein belongs to the UppP family.

It localises to the cell inner membrane. It catalyses the reaction di-trans,octa-cis-undecaprenyl diphosphate + H2O = di-trans,octa-cis-undecaprenyl phosphate + phosphate + H(+). In terms of biological role, catalyzes the dephosphorylation of undecaprenyl diphosphate (UPP). Confers resistance to bacitracin. This Prochlorococcus marinus (strain MIT 9215) protein is Undecaprenyl-diphosphatase.